Here is a 497-residue protein sequence, read N- to C-terminus: NAD(P)H-quinone oxidoreductase chain 4, chloroplastic (497 aa).

A run of 14 helical transmembrane segments spans residues valine 5 to leucine 25, tyrosine 36 to phenylalanine 56, leucine 88 to isoleucine 108, threonine 112 to serine 132, isoleucine 135 to leucine 155, phenylalanine 168 to phenylalanine 188, valine 212 to histidine 232, histidine 243 to isoleucine 263, phenylalanine 275 to isoleucine 295, isoleucine 306 to glutamate 326, glycine 331 to glycine 351, leucine 387 to threonine 407, glycine 418 to leucine 438, and leucine 463 to isoleucine 483.

It belongs to the complex I subunit 4 family.

The protein localises to the plastid. It is found in the chloroplast thylakoid membrane. It catalyses the reaction a plastoquinone + NADH + (n+1) H(+)(in) = a plastoquinol + NAD(+) + n H(+)(out). The catalysed reaction is a plastoquinone + NADPH + (n+1) H(+)(in) = a plastoquinol + NADP(+) + n H(+)(out). The protein is NAD(P)H-quinone oxidoreductase chain 4, chloroplastic of Adiantum capillus-veneris (Maidenhair fern).